We begin with the raw amino-acid sequence, 525 residues long: Ubiquitin carboxyl-terminal hydrolase 22 (525 aa).

The segment at 21–138 (PGCSHLGSFK…KEEQRKAWKM (118 aa)) adopts a UBP-type zinc-finger fold. Positions 23, 25, 63, 66, 76, 79, 84, 89, 93, 99, 112, and 115 each coordinate Zn(2+). At K129 the chain carries N6-acetyllysine. T147 carries the post-translational modification Phosphothreonine. Positions 176–520 (RGLINLGNTC…EGYLLFYHKQ (345 aa)) constitute a USP domain. C185 acts as the Nucleophile in catalysis. S237 is subject to Phosphoserine. H479 serves as the catalytic Proton acceptor.

It belongs to the peptidase C19 family. UBP8 subfamily. In terms of assembly, component of some SAGA transcription coactivator-HAT complexes, at least composed of ATXN7, ATXN7L3, ENY2, GCN5L2, SUPT3H, TAF10, TRRAP and USP22. Within the SAGA complex, ATXN7L3, ENY2 and USP22 form a subcomplex required for histone deubiquitination. Interacts directly with ATXN7L3; leading to its recruitment to the SAGA complex. Interacts with ATXN7L3 and weakly with ATXN7L3B. Interacts with MED1. Post-translationally, phosphorylated in G2/M phase, but not in G1 phase by CDK1. In terms of processing, ubiquitinated and subsequently degraded in a CDC20-dependent manner. As to expression, highly expressed in brain and weakly in other organs.

Its subcellular location is the nucleus. It localises to the cytoplasm. The enzyme catalyses Thiol-dependent hydrolysis of ester, thioester, amide, peptide and isopeptide bonds formed by the C-terminal Gly of ubiquitin (a 76-residue protein attached to proteins as an intracellular targeting signal).. Its function is as follows. Deubiquitinase that plays a role in several cellular processes including transcriptional regulation, cell cycle progression or innate immunity. As part of the transcription regulatory histone acetylation (HAT) complex SAGA, catalyzes the deubiquitination of both histones H2A and H2B, thereby acting as a transcriptional coactivator. Recruited to specific gene promoters by activators such as MYC, where it is required for transcription. Facilitates cell-cycle progression by stabilizing CCNB1 and antagonizing its proteasome-mediated degradation in a cell cycle-specific manner. Modulates cell cycle progression and apoptosis also by antagonizing TP53 transcriptional activation through deacetylase SIRT1 stabilization. Plays multiple roles in immunity and inflammation. Participates in antiviral response by deubiquitinating the importin KPNA2, leading to IRF3 nuclear translocation and subsequent type I interferon production. Acts as a central regulator of type III IFN signaling by negatively regulating STING1 activation and ubiquitination. Inhibits NLRP3 inflammasome activation by promoting NLRP3 degradation through ATG5-dependent autophagy. Deubiquitinates CD274 to induce its stabilization and thereby participates in maintenance of immune tolerance to self. Controls necroptotic cell death by regulating RIPK3 phosphorylation and ubiquitination. During bacterial infection, promotes pro-inflammatory response by targeting TRAF6 and removing its 'Lys-48'-linked polyubiquitination. The polypeptide is Ubiquitin carboxyl-terminal hydrolase 22 (Usp22) (Mus musculus (Mouse)).